The following is a 280-amino-acid chain: Tryptophan 2,3-dioxygenase (280 aa).

Substrate is bound by residues 49–53 (FIIIH), Tyr-111, and Arg-115. His-238 contributes to the heme binding site. Thr-252 contacts substrate.

The protein belongs to the tryptophan 2,3-dioxygenase family. Homotetramer. Requires heme as cofactor.

It catalyses the reaction L-tryptophan + O2 = N-formyl-L-kynurenine. Its pathway is amino-acid degradation; L-tryptophan degradation via kynurenine pathway; L-kynurenine from L-tryptophan: step 1/2. In terms of biological role, heme-dependent dioxygenase that catalyzes the oxidative cleavage of the L-tryptophan (L-Trp) pyrrole ring and converts L-tryptophan to N-formyl-L-kynurenine. Catalyzes the oxidative cleavage of the indole moiety. This Geobacillus thermodenitrificans (strain NG80-2) protein is Tryptophan 2,3-dioxygenase.